Reading from the N-terminus, the 408-residue chain is Succinylornithine transaminase (408 aa).

Lys-252 carries the N6-(pyridoxal phosphate)lysine modification.

It belongs to the class-III pyridoxal-phosphate-dependent aminotransferase family. AstC subfamily. Pyridoxal 5'-phosphate serves as cofactor.

It carries out the reaction N(2)-succinyl-L-ornithine + 2-oxoglutarate = N-succinyl-L-glutamate 5-semialdehyde + L-glutamate. It participates in amino-acid degradation; L-arginine degradation via AST pathway; L-glutamate and succinate from L-arginine: step 3/5. Functionally, catalyzes the transamination of N(2)-succinylornithine and alpha-ketoglutarate into N(2)-succinylglutamate semialdehyde and glutamate. Can also act as an acetylornithine aminotransferase. This is Succinylornithine transaminase from Salmonella dublin (strain CT_02021853).